Reading from the N-terminus, the 774-residue chain is 5-methyltetrahydropteroyltriglutamate--homocysteine methyltransferase (774 aa).

Residues 15 to 18 (RELK) and Lys116 contribute to the 5-methyltetrahydropteroyltri-L-glutamate site. Residues 445 to 447 (IGS) and Glu498 contribute to the L-homocysteine site. L-methionine is bound by residues 445-447 (IGS) and Glu498. 5-methyltetrahydropteroyltri-L-glutamate-binding positions include 529-530 (RC) and Trp575. Residue Asp613 coordinates L-homocysteine. Residue Asp613 participates in L-methionine binding. Residue Glu619 participates in 5-methyltetrahydropteroyltri-L-glutamate binding. Zn(2+)-binding residues include His655, Cys657, and Glu679. Catalysis depends on His708, which acts as the Proton donor. Cys740 provides a ligand contact to Zn(2+).

The protein belongs to the vitamin-B12 independent methionine synthase family. It depends on Zn(2+) as a cofactor.

The enzyme catalyses 5-methyltetrahydropteroyltri-L-glutamate + L-homocysteine = tetrahydropteroyltri-L-glutamate + L-methionine. It participates in amino-acid biosynthesis; L-methionine biosynthesis via de novo pathway; L-methionine from L-homocysteine (MetE route): step 1/1. Catalyzes the transfer of a methyl group from 5-methyltetrahydrofolate to homocysteine resulting in methionine formation. The protein is 5-methyltetrahydropteroyltriglutamate--homocysteine methyltransferase of Flavobacterium johnsoniae (strain ATCC 17061 / DSM 2064 / JCM 8514 / BCRC 14874 / CCUG 350202 / NBRC 14942 / NCIMB 11054 / UW101) (Cytophaga johnsonae).